Here is a 66-residue protein sequence, read N- to C-terminus: Large ribosomal subunit protein bL32 (66 aa).

The span at 1 to 19 (MAIVPKRKTSKQRKHKRNT) shows a compositional bias: basic residues. Residues 1-21 (MAIVPKRKTSKQRKHKRNTHS) form a disordered region.

The protein belongs to the bacterial ribosomal protein bL32 family.

This is Large ribosomal subunit protein bL32 from Mycoplasmopsis synoviae (strain 53) (Mycoplasma synoviae).